The sequence spans 338 residues: Heat-inducible transcription repressor HrcA (338 aa).

This sequence belongs to the HrcA family.

Negative regulator of class I heat shock genes (grpE-dnaK-dnaJ and groELS operons). Prevents heat-shock induction of these operons. This Streptomyces albus G protein is Heat-inducible transcription repressor HrcA.